Consider the following 203-residue polypeptide: Small ribosomal subunit protein uS4 (203 aa).

One can recognise an S4 RNA-binding domain in the interval Gln-93 to Val-156.

It belongs to the universal ribosomal protein uS4 family. As to quaternary structure, part of the 30S ribosomal subunit. Contacts protein S5. The interaction surface between S4 and S5 is involved in control of translational fidelity.

In terms of biological role, one of the primary rRNA binding proteins, it binds directly to 16S rRNA where it nucleates assembly of the body of the 30S subunit. Functionally, with S5 and S12 plays an important role in translational accuracy. This chain is Small ribosomal subunit protein uS4, found in Lactococcus lactis subsp. lactis (strain IL1403) (Streptococcus lactis).